Reading from the N-terminus, the 394-residue chain is MEFIIKSLLDTDLYKFTMMQAVLHQYPGAQVEYRFKCRTPGVDLARFINEISHEIDGLCALRFSKEELDYLRGLRFMKPDFVDFLGLFHLDRKYLQLRASTQVSGEIELDIRGPWLHTILFEVPLLAIINEVWFRNTSMLNLDVGRARLDAKVRLLKGESGYEECSIADYGTRRRYSRQWHAELLPLLAQGLGSNFVGTSNVYFAKQYGYTPLGTMAHEYLQAFQALGPRLRDSQVAGLEAWAREYRGDLGIALSDVVGLDAFLGDFDLYFCKLFDGMRHDSGDPFKWGERIIMHLESHRIDPRTKVLVFSDGLDMNKVMRLYQHFRGRCRLAFGVGTSLTNDLGPTPLQIVIKMVRCNGQPVAKLSDSPGKSMCDDPAYLHYLRQVFGVSADV.

At H218 the chain carries Phosphohistidine; by autocatalysis.

The protein belongs to the NAPRTase family. In terms of processing, transiently phosphorylated on a His residue during the reaction cycle. Phosphorylation strongly increases the affinity for substrates and increases the rate of nicotinate D-ribonucleotide production. Dephosphorylation regenerates the low-affinity form of the enzyme, leading to product release.

The enzyme catalyses nicotinate + 5-phospho-alpha-D-ribose 1-diphosphate + ATP + H2O = nicotinate beta-D-ribonucleotide + ADP + phosphate + diphosphate. Its pathway is cofactor biosynthesis; NAD(+) biosynthesis; nicotinate D-ribonucleotide from nicotinate: step 1/1. Catalyzes the synthesis of beta-nicotinate D-ribonucleotide from nicotinate and 5-phospho-D-ribose 1-phosphate at the expense of ATP. The chain is Nicotinate phosphoribosyltransferase from Xylella fastidiosa (strain 9a5c).